The sequence spans 399 residues: Enoyl-[acyl-carrier-protein] reductase [NADH] (399 aa).

Residues 48–53 (GASTGY), 74–75 (FE), 111–112 (DA), and 139–140 (LA) contribute to the NAD(+) site. A substrate-binding site is contributed by Tyr225. Residue Tyr235 is the Proton donor of the active site. NAD(+)-binding positions include Lys244 and 273-275 (VVT).

This sequence belongs to the TER reductase family. As to quaternary structure, monomer.

It carries out the reaction a 2,3-saturated acyl-[ACP] + NAD(+) = a (2E)-enoyl-[ACP] + NADH + H(+). The protein operates within lipid metabolism; fatty acid biosynthesis. Involved in the final reduction of the elongation cycle of fatty acid synthesis (FAS II). Catalyzes the reduction of a carbon-carbon double bond in an enoyl moiety that is covalently linked to an acyl carrier protein (ACP). The protein is Enoyl-[acyl-carrier-protein] reductase [NADH] of Serratia proteamaculans (strain 568).